A 229-amino-acid polypeptide reads, in one-letter code: 5'-methylthioadenosine/S-adenosylhomocysteine nucleosidase (229 aa).

Residue Glu-12 is the Proton acceptor of the active site. Substrate contacts are provided by residues Gly-78, Ile-152, and 173-174; that span reads ME. The Proton donor role is filled by Asp-197.

It belongs to the PNP/UDP phosphorylase family. MtnN subfamily.

The enzyme catalyses S-adenosyl-L-homocysteine + H2O = S-(5-deoxy-D-ribos-5-yl)-L-homocysteine + adenine. It carries out the reaction S-methyl-5'-thioadenosine + H2O = 5-(methylsulfanyl)-D-ribose + adenine. It catalyses the reaction 5'-deoxyadenosine + H2O = 5-deoxy-D-ribose + adenine. Its pathway is amino-acid biosynthesis; L-methionine biosynthesis via salvage pathway; S-methyl-5-thio-alpha-D-ribose 1-phosphate from S-methyl-5'-thioadenosine (hydrolase route): step 1/2. Functionally, catalyzes the irreversible cleavage of the glycosidic bond in both 5'-methylthioadenosine (MTA) and S-adenosylhomocysteine (SAH/AdoHcy) to adenine and the corresponding thioribose, 5'-methylthioribose and S-ribosylhomocysteine, respectively. Also cleaves 5'-deoxyadenosine, a toxic by-product of radical S-adenosylmethionine (SAM) enzymes, into 5-deoxyribose and adenine. In Histophilus somni (strain 129Pt) (Haemophilus somnus), this protein is 5'-methylthioadenosine/S-adenosylhomocysteine nucleosidase.